We begin with the raw amino-acid sequence, 1603 residues long: Vitellogenin-3 (1603 aa).

Residues 1–15 (MKSIIIASLVALAIA) form the signal peptide. Residues 24–685 (FSPKSEYVYK…EKNAFLPKEV (662 aa)) enclose the Vitellogenin domain. Residue asparagine 1266 is glycosylated (N-linked (GlcNAc...) asparagine). The region spanning 1306–1475 (ATCKVGQSEV…SYLLKNEECE (170 aa)) is the VWFD domain. Intrachain disulfides connect cysteine 1308-cysteine 1438 and cysteine 1330-cysteine 1474.

Expressed in the intestine of adult hermaphrodites.

It localises to the secreted. In terms of biological role, precursor of the egg-yolk proteins that are sources of nutrients during embryonic development. Together with other vitellogenins, may play a role in modulating life-span, acting via induction of autophagy and lysosomal lipolysis. The polypeptide is Vitellogenin-3 (vit-3) (Caenorhabditis elegans).